A 508-amino-acid polypeptide reads, in one-letter code: Cytochrome c-552 (508 aa).

A signal peptide spans 1 to 23 (MNKSYKILLTGSVIAIGAMGLMA). His-103 provides a ligand contact to heme c. Residues Cys-131, Cys-134, and Lys-135 each coordinate heme. The heme c site is built by Cys-169, Cys-172, His-173, Cys-211, Cys-214, and His-215. Ca(2+) is bound by residues Glu-217, Tyr-218, Lys-274, and Gln-276. Position 218 (Tyr-218) interacts with substrate. His-277 lines the substrate pocket. 9 residues coordinate heme c: His-288, Cys-295, Cys-298, His-299, His-313, Cys-326, Cys-329, His-330, and His-405. The disordered stretch occupies residues 485–508 (GRLDPKTLEGMSNKSSWSQTELSQ). The span at 494-508 (GMSNKSSWSQTELSQ) shows a compositional bias: polar residues.

It belongs to the cytochrome c-552 family. The cofactor is Ca(2+). Requires heme c as cofactor.

It localises to the periplasm. It carries out the reaction 6 Fe(III)-[cytochrome c] + NH4(+) + 2 H2O = 6 Fe(II)-[cytochrome c] + nitrite + 8 H(+). It participates in nitrogen metabolism; nitrate reduction (assimilation). Catalyzes the reduction of nitrite to ammonia, consuming six electrons in the process. The sequence is that of Cytochrome c-552 from Desulfotalea psychrophila (strain LSv54 / DSM 12343).